A 233-amino-acid polypeptide reads, in one-letter code: Homeobox protein ceh-30 (233 aa).

The span at 50 to 85 (NNSTYSHDLDPSPQSVRSDLSTSPRASSPDRNSPMS) shows a compositional bias: polar residues. 2 disordered regions span residues 50–93 (NNST…KART) and 206–233 (FQAT…SNSD). The homeobox DNA-binding region spans 88 to 147 (SRKARTIFTDKQLQELENTFEKQKYLSVQDRMDLAHRMGLSDTQVKTWYQNRRTKWKRQA). Residues 224 to 233 (PQLDVSSNSD) are compositionally biased toward polar residues.

It localises to the nucleus. Functionally, cell-type specific anti-apoptotic transcription factor required for the sexually dimorphic survival of the male-specific CEM (cephalic male) sensory neurons during sex determination. In hermaphrodites, the homologous cells undergo programmed cell death due to transcriptional repression of ceh-30 by tra-1, the terminal regulator in the sex determination pathway. This is Homeobox protein ceh-30 from Caenorhabditis briggsae.